A 299-amino-acid chain; its full sequence is Sulfotransferase 1B1 (299 aa).

3'-phosphoadenylyl sulfate is bound at residue 48-53 (KSGTTW). 107-109 (KTH) serves as a coordination point for substrate. The active-site Proton acceptor is the His-109. Residues Arg-131, Ser-139, Tyr-194, 228–233 (TSFEMM), and 258–260 (RKG) contribute to the 3'-phosphoadenylyl sulfate site.

Belongs to the sulfotransferase 1 family. Liver specific.

It localises to the cytoplasm. It catalyses the reaction a phenol + 3'-phosphoadenylyl sulfate = an aryl sulfate + adenosine 3',5'-bisphosphate + H(+). It carries out the reaction 3,3',5-triiodo-L-thyronine + 3'-phosphoadenylyl sulfate = 3,3',5-triiodo-L-thyronine sulfate + adenosine 3',5'-bisphosphate + H(+). The catalysed reaction is 3,3',5'-triiodo-L-thyronine + 3'-phosphoadenylyl sulfate = 3,3',5'-triiodo-L-thyronine sulfate + adenosine 3',5'-bisphosphate + H(+). The enzyme catalyses 3,3'-diiodo-L-thyronine + 3'-phosphoadenylyl sulfate = 3,3'-diiodo-L-thyronine sulfate + adenosine 3',5'-bisphosphate + H(+). It catalyses the reaction dopamine + 3'-phosphoadenylyl sulfate = dopamine 3-O-sulfate + adenosine 3',5'-bisphosphate + H(+). It carries out the reaction dopamine + 3'-phosphoadenylyl sulfate = dopamine 4-O-sulfate + adenosine 3',5'-bisphosphate + H(+). The catalysed reaction is 4-ethylphenol + 3'-phosphoadenylyl sulfate = 4-ethylphenyl sulfate + adenosine 3',5'-bisphosphate + H(+). In terms of biological role, sulfotransferase that utilizes 3'-phospho-5'-adenylyl sulfate (PAPS) as sulfonate donor to catalyze the sulfate conjugation of dopamine, small phenols such as 1-naphthol and p-nitrophenol and thyroid hormones, including 3,3'-diiodothyronine, triidothyronine (T3) and reverse triiodothyronine (rT3). May play a role in gut microbiota-host metabolic interaction. O-sulfonates 4-ethylphenol (4-EP), a dietary tyrosine-derived metabolite produced by gut bacteria. The product 4-EPS crosses the blood-brain barrier and may negatively regulate oligodendrocyte maturation and myelination, affecting the functional connectivity of different brain regions associated with the limbic system. This is Sulfotransferase 1B1 from Mus musculus (Mouse).